A 732-amino-acid chain; its full sequence is uncharacterized protein (732 aa).

In terms of domain architecture, TR mART core spans 163-390; it reads YYTINELNYL…FGIVAKKKYE (228 aa). Residues R285, S309, and E354 contribute to the active site.

This is an uncharacterized protein from Acanthamoeba polyphaga mimivirus (APMV).